A 312-amino-acid chain; its full sequence is Molybdenum cofactor biosynthesis bifunctional protein (312 aa).

The interval 1–155 is molybdenum cofactor biosynthesis protein C; sequence MEFTHLDENG…GGKSSAAEYH (155 aa). Residues 74–76 and 110–111 contribute to the substrate site; these read LCH and ME. Residue D125 is part of the active site. Positions 156-312 are molybdenum cofactor biosynthesis protein B; it reads PRTAILVMSD…FPMLKGDGHA (157 aa).

It in the N-terminal section; belongs to the MoaC family. The protein in the C-terminal section; belongs to the MoaB/Mog family.

The enzyme catalyses (8S)-3',8-cyclo-7,8-dihydroguanosine 5'-triphosphate = cyclic pyranopterin phosphate + diphosphate. It participates in cofactor biosynthesis; molybdopterin biosynthesis. Its function is as follows. Catalyzes the conversion of (8S)-3',8-cyclo-7,8-dihydroguanosine 5'-triphosphate to cyclic pyranopterin monophosphate (cPMP). This is Molybdenum cofactor biosynthesis bifunctional protein (moaCB) from Chlorobaculum tepidum (strain ATCC 49652 / DSM 12025 / NBRC 103806 / TLS) (Chlorobium tepidum).